Here is a 297-residue protein sequence, read N- to C-terminus: Transcription factor bHLH129 (297 aa).

The interval Met-1–Leu-145 is disordered. Ser-35 is subject to Phosphoserine. Positions Ser-68–Leu-82 are enriched in low complexity. The segment covering Pro-111 to Gln-121 has biased composition (gly residues). Ser-138 is modified (phosphoserine). One can recognise a bHLH domain in the interval Phe-239–Leu-289.

Homodimer.

The protein resides in the nucleus. In Arabidopsis thaliana (Mouse-ear cress), this protein is Transcription factor bHLH129 (BHLH129).